The chain runs to 239 residues: Ribosomal RNA small subunit methyltransferase A (239 aa).

Positions 23, 25, 50, 72, 97, and 116 each coordinate S-adenosyl-L-methionine.

Belongs to the class I-like SAM-binding methyltransferase superfamily. rRNA adenine N(6)-methyltransferase family. RsmA subfamily.

Its subcellular location is the cytoplasm. The catalysed reaction is adenosine(1518)/adenosine(1519) in 16S rRNA + 4 S-adenosyl-L-methionine = N(6)-dimethyladenosine(1518)/N(6)-dimethyladenosine(1519) in 16S rRNA + 4 S-adenosyl-L-homocysteine + 4 H(+). Its function is as follows. Specifically dimethylates two adjacent adenosines (A1518 and A1519) in the loop of a conserved hairpin near the 3'-end of 16S rRNA in the 30S particle. May play a critical role in biogenesis of 30S subunits. This chain is Ribosomal RNA small subunit methyltransferase A, found in Rickettsia felis (strain ATCC VR-1525 / URRWXCal2) (Rickettsia azadi).